The sequence spans 257 residues: MSWSAAQYVKFEDERTRPARDLLAQVPDLPAGPAFDLGCGPGNSTQLILERFPNNPLVGIDSDENMLEAARKRLLGLRFERADLIGWTPPQGAALFFANAVFQWLPKHIDLLERLVDALVPGGTLAVQMPDNLDEPSHLLMQETAEERAFAAAFSGRTIRRVPLPSPRTYVERLAPKVARVDVWHTTYYHPLASANAIVEWVKGTGLRPYLDALPANRRKDYLAAYAEKIRRAYPAMGDGRVLLRFPRLFIVAVKAA.

Belongs to the methyltransferase superfamily. Tam family.

It localises to the cytoplasm. The enzyme catalyses trans-aconitate + S-adenosyl-L-methionine = (E)-3-(methoxycarbonyl)pent-2-enedioate + S-adenosyl-L-homocysteine. Functionally, catalyzes the S-adenosylmethionine monomethyl esterification of trans-aconitate. This Sinorhizobium fredii (strain NBRC 101917 / NGR234) protein is Trans-aconitate 2-methyltransferase.